Reading from the N-terminus, the 775-residue chain is Serine/threonine-protein kinase-like protein CCR1 (775 aa).

The N-terminal stretch at 1 to 23 (METRCSLLFLSLILLYLPKPGSG) is a signal peptide. Over 24–439 (FGSSGPIAAS…DKHWHQLQRL (416 aa)) the chain is Extracellular. Asn57, Asn102, Asn167, Asn213, Asn220, Asn241, Asn261, Asn292, Asn328, and Asn360 each carry an N-linked (GlcNAc...) asparagine glycan. One copy of the TNFR-Cys repeat lies at 351–406 (PCNEKEFAFNASILNEPDLTSLCVRKELMVCSPCGSDCSHGFFLSSSCTANSDRIC). 3 disulfide bridges follow: Cys352/Cys381, Cys384/Cys398, and Cys388/Cys406. Asn414 is a glycosylation site (N-linked (GlcNAc...) asparagine). A helical membrane pass occupies residues 440–460 (VLIIGSCASALLIIIIGCCVV). At 461 to 775 (PRIVTSPNKE…EHVARDALIF (315 aa)) the chain is on the cytoplasmic side. The region spanning 520-770 (FKEFNELGRG…LANWLEHVAR (251 aa)) is the Protein kinase domain. Residues 526 to 534 (LGRGSYGFV) and Lys548 each bind ATP. Asp645 (proton acceptor) is an active-site residue.

This sequence belongs to the protein kinase superfamily. Ser/Thr protein kinase family. In terms of assembly, homodimer. As to expression, expressed in roots, leaves, shoot apical meristems (SAM), and floral buds.

It localises to the membrane. It catalyses the reaction L-seryl-[protein] + ATP = O-phospho-L-seryl-[protein] + ADP + H(+). The catalysed reaction is L-threonyl-[protein] + ATP = O-phospho-L-threonyl-[protein] + ADP + H(+). Serine/threonine-protein kinase with low activity. This is Serine/threonine-protein kinase-like protein CCR1 (CCR1) from Arabidopsis thaliana (Mouse-ear cress).